The following is a 51-amino-acid chain: MRDKIRLVSTAGTGFFYTTDKNKRNMPEKMEIKKFDPKIRKHVLFKEAKIK.

It belongs to the bacterial ribosomal protein bL33 family.

The polypeptide is Large ribosomal subunit protein bL33 (Pseudoalteromonas translucida (strain TAC 125)).